The following is a 119-amino-acid chain: Protein Wnt-4 (119 aa).

Residue Ser-1 is the site of O-palmitoleoyl serine; by PORCN attachment. 2 cysteine pairs are disulfide-bonded: Cys-69-Cys-100 and Cys-85-Cys-95. Asn-86 is a glycosylation site (N-linked (GlcNAc...) asparagine).

It belongs to the Wnt family. In terms of processing, palmitoleoylation is required for efficient binding to frizzled receptors. Depalmitoleoylation leads to Wnt signaling pathway inhibition.

The protein resides in the secreted. It is found in the extracellular space. The protein localises to the extracellular matrix. Functionally, ligand for members of the frizzled family of seven transmembrane receptors. Plays an important role in embryonic development. The sequence is that of Protein Wnt-4 (WNT4) from Meleagris gallopavo (Wild turkey).